A 210-amino-acid chain; its full sequence is Ribosomal RNA small subunit methyltransferase G (210 aa).

Residues Gly76, Leu81, 127–128, and Arg142 each bind S-adenosyl-L-methionine; that span reads VE.

This sequence belongs to the methyltransferase superfamily. RNA methyltransferase RsmG family.

The protein localises to the cytoplasm. The enzyme catalyses guanosine(527) in 16S rRNA + S-adenosyl-L-methionine = N(7)-methylguanosine(527) in 16S rRNA + S-adenosyl-L-homocysteine. Functionally, specifically methylates the N7 position of guanine in position 527 of 16S rRNA. This Vibrio atlanticus (strain LGP32) (Vibrio splendidus (strain Mel32)) protein is Ribosomal RNA small subunit methyltransferase G.